The chain runs to 202 residues: Large ribosomal subunit protein bL25 (202 aa).

The segment at 182–202 (QTAPEEEEGTAAETTEPELAE) is disordered. The segment covering 185–202 (PEEEEGTAAETTEPELAE) has biased composition (acidic residues).

This sequence belongs to the bacterial ribosomal protein bL25 family. CTC subfamily. As to quaternary structure, part of the 50S ribosomal subunit; part of the 5S rRNA/L5/L18/L25 subcomplex. Contacts the 5S rRNA. Binds to the 5S rRNA independently of L5 and L18.

This is one of the proteins that binds to the 5S RNA in the ribosome where it forms part of the central protuberance. The polypeptide is Large ribosomal subunit protein bL25 (Enterococcus faecalis (strain ATCC 700802 / V583)).